The sequence spans 262 residues: Small ribosomal subunit protein eS4 (262 aa).

Positions 42–104 constitute an S4 RNA-binding domain; it reads LPLLIFLRNR…TGEFFRLIYD (63 aa).

It belongs to the eukaryotic ribosomal protein eS4 family.

The protein is Small ribosomal subunit protein eS4 (RpS4) of Lysiphlebus testaceipes (Greenbugs aphid parastoid).